A 445-amino-acid chain; its full sequence is Phospho-alpha-glucosidase PagL (445 aa).

4–71 (YSICIVGGGS…ELEEVIWTTD (68 aa)) is a binding site for NAD(+). Positions 94 and 148 each coordinate substrate. C171 lines the Mn(2+) pocket. Catalysis depends on D172, which acts as the Proton donor. A Mn(2+)-binding site is contributed by H201. The active-site Proton acceptor is Y264. R284 serves as a coordination point for substrate.

Belongs to the glycosyl hydrolase 4 family. As to quaternary structure, homotetramer. It depends on NAD(+) as a cofactor. The cofactor is Mn(2+).

Phospho-alpha-glucosidase that catalyzes the hydrolysis of p-nitrophenyl-alpha-D-glucopyranoside 6-phosphate, but is not able to cleave 'natural' phospho-alpha-glucosides produced via the phosphoenolpyruvate-dependent sugar phosphotransferase system (PEP-PTS). The protein is Phospho-alpha-glucosidase PagL (pagL) of Clostridium acetobutylicum (strain ATCC 824 / DSM 792 / JCM 1419 / IAM 19013 / LMG 5710 / NBRC 13948 / NRRL B-527 / VKM B-1787 / 2291 / W).